The sequence spans 218 residues: Glutathione S-transferase Mu 4 (218 aa).

One can recognise a GST N-terminal domain in the interval 1-88 (MPMTLGYWDI…YIARKHNLCG (88 aa)). Glutathione-binding positions include 7–8 (YW), 46–50 (WLSEK), 59–60 (NL), and 72–73 (QS). Residues 90–208 (TEEEKIRVDI…KTSRFLRTPL (119 aa)) enclose the GST C-terminal domain. Residue Tyr116 participates in substrate binding.

It belongs to the GST superfamily. Mu family. In terms of assembly, homodimer. As to expression, widely expressed.

The protein resides in the cytoplasm. It catalyses the reaction RX + glutathione = an S-substituted glutathione + a halide anion + H(+). The catalysed reaction is 1-chloro-2,4-dinitrobenzene + glutathione = 2,4-dinitrophenyl-S-glutathione + chloride + H(+). The enzyme catalyses (13S,14S)-epoxy-(4Z,7Z,9E,11E,16Z,19Z)-docosahexaenoate + glutathione = (13R)-S-glutathionyl-(14S)-hydroxy-(4Z,7Z,9E,11E,16Z,19Z)-docosahexaenoate. It carries out the reaction leukotriene C4 = leukotriene A4 + glutathione. Conjugation of reduced glutathione to a wide number of exogenous and endogenous hydrophobic electrophiles. Catalyzes the conjugation of leukotriene A4 with reduced glutathione (GSH) to form leukotriene C4. Can also catalyze the transfer of a glutathionyl group from glutathione (GSH) to 13(S),14(S)-epoxy-docosahexaenoic acid to form maresin conjugate in tissue regeneration 1 (MCTR1), a bioactive lipid mediator that possess potent anti-inflammatory and proresolving actions. This Mus musculus (Mouse) protein is Glutathione S-transferase Mu 4.